The sequence spans 415 residues: Vascular endothelial growth factor C (415 aa).

Positions 1-31 are cleaved as a signal peptide; that stretch reads MHLLCFLSLACSLLAAALIPSPREAPATVAA. Residues 32 to 107 constitute a propeptide that is removed on maturation; that stretch reads FESGLGFSEA…RTGDSVKFAA (76 aa). Cystine bridges form between Cys127/Cys169, Cys158/Cys205, and Cys162/Cys207. N-linked (GlcNAc...) asparagine glycosylation is found at Asn171, Asn201, and Asn236. Residues 224–415 constitute a propeptide that is removed on maturation; the sequence is SLPATLPQCQ…PSYWKRPHLN (192 aa). Tandem repeats lie at residues 276–291, 300–315, 324–339, and 343–358. Residues 276–358 are 4 X 16 AA repeats of C-X(10)-C-X-C-X(1,3)-C; it reads CGPNKELDED…LNPGKCACEC (83 aa).

It belongs to the PDGF/VEGF growth factor family. Homodimer; non-covalent and antiparallel. Interacts with FLT4/VEGFR3; the interaction is required for FLT4/VEGFR3 homodimarization and activation. Undergoes a complex proteolytic maturation which generates a variety of processed secreted forms with increased activity toward VEGFR-3, but only the fully processed form could activate VEGFR-2. VEGF-C first form an antiparallel homodimer linked by disulfide bonds. Before secretion, a cleavage occurs between Arg-223 and Ser-224 producing a heterotetramer. The next extracellular step of the processing removes the N-terminal propeptide. Finally the mature VEGF-C is composed mostly of two VEGF homology domains (VHDs) bound by non-covalent interactions. As to expression, expressed in adult heart, brain, spleen, lung, liver, skeletal muscle, kidney, testis and intestine with higher levels in heart, brain and kidney. Isoform 4 levels are very low. Isoform 3 is mostly expressed in liver and has reduced expression level in other tissues. Isoform 2 is mostly expressed in brain and kidney, although a lower level expression in other tissues is also detectable.

The protein localises to the secreted. Growth factor active in angiogenesis, and endothelial cell growth, stimulating their proliferation and migration and also has effects on the permeability of blood vessels. May function in angiogenesis of the venous and lymphatic vascular systems during embryogenesis, and also in the maintenance of differentiated lymphatic endothelium in adults. Binds and activates KDR/VEGFR2 and FLT4/VEGFR3 receptors. The chain is Vascular endothelial growth factor C (Vegfc) from Mus musculus (Mouse).